The chain runs to 344 residues: Trace amine-associated receptor 8b (344 aa).

The Extracellular segment spans residues 1–31 (MTSNFSQPALQLCYENTNGSCIKTPYSPGPR). 2 N-linked (GlcNAc...) asparagine glycosylation sites follow: Asn-4 and Asn-18. 2 disulfide bridges follow: Cys-21-Cys-185 and Cys-104-Cys-189. Residues 32-52 (VILYMVFGFGAVLAVCGNLLV) traverse the membrane as a helical segment. Residues 53–67 (VISVLHFKQLHSPAN) are Cytoplasmic-facing. Residues 68–88 (FLIASLASADFLVGISVMPFS) form a helical membrane-spanning segment. The Extracellular portion of the chain corresponds to 89 to 111 (MVRSIESCWYFGDAFCSLHSCCD). Residues 112 to 132 (VAFCYSSALHLCFISVDRYIA) form a helical membrane-spanning segment. Over 133–146 (VTDPLVYPTKFTVS) the chain is Cytoplasmic. Residues 147–167 (VSGICISISWILPLVYSSAVF) form a helical membrane-spanning segment. Residues 168-195 (YTGISAKGIESLVSALNCVGGCQIVVNQ) are Extracellular-facing. The helical transmembrane segment at 196-216 (DWVLIDFLLFFIPTLVMIILY) threads the bilayer. The Cytoplasmic portion of the chain corresponds to 217-260 (SKIFLVAKQQAVKIETSVSDNRGESSSESHKARVAKRERKAAKT). The helical transmembrane segment at 261 to 281 (LGVTVVAFMVSWLPYTIDSLV) threads the bilayer. A topological domain (extracellular) is located at residue Asp-282. The chain crosses the membrane as a helical span at residues 283-303 (AFVGFITPAYVYEICCWSAYY). Topologically, residues 304–344 (NSAMNPLIYAFFYPWFRKAIKLILSGEILKSHSSTMSLFSE) are cytoplasmic.

The protein belongs to the G-protein coupled receptor 1 family. In terms of tissue distribution, specifically expressed in neurons of the olfactory epithelium.

The protein localises to the cell membrane. Its function is as follows. Olfactory receptor specific for trace amines. Trace amine compounds are enriched in animal body fluids and act on trace amine-associated receptors (TAARs) to elicit both intraspecific and interspecific innate behaviors. Ligand-binding causes a conformation change that triggers signaling via G alpha proteins, possibly G(i)/G(o) G alpha proteins. This is Trace amine-associated receptor 8b from Mus musculus (Mouse).